The primary structure comprises 407 residues: Chorismate synthase (407 aa).

Arg40 and Arg46 together coordinate NADP(+). FMN is bound by residues Arg138–Ser140 and Gln259–Ala260. Basic and acidic residues predominate over residues Arg275–Met284. Residues Arg275–Gly308 are disordered. FMN-binding positions include Gly303, Lys318–Thr322, and Arg344.

This sequence belongs to the chorismate synthase family. Homotetramer. Requires FMNH2 as cofactor.

It catalyses the reaction 5-O-(1-carboxyvinyl)-3-phosphoshikimate = chorismate + phosphate. It participates in metabolic intermediate biosynthesis; chorismate biosynthesis; chorismate from D-erythrose 4-phosphate and phosphoenolpyruvate: step 7/7. Functionally, catalyzes the anti-1,4-elimination of the C-3 phosphate and the C-6 proR hydrogen from 5-enolpyruvylshikimate-3-phosphate (EPSP) to yield chorismate, which is the branch point compound that serves as the starting substrate for the three terminal pathways of aromatic amino acid biosynthesis. This reaction introduces a second double bond into the aromatic ring system. The chain is Chorismate synthase from Mycobacterium marinum (strain ATCC BAA-535 / M).